Here is a 661-residue protein sequence, read N- to C-terminus: Ubiquitin carboxyl-terminal hydrolase 51 (661 aa).

Residues 1–144 (MRGTQGAQEM…SENSLLEVGS (144 aa)) are disordered. Residues 21 to 30 (TSENLTSRGS) are compositionally biased toward polar residues. The span at 53-71 (PRRKPRPRPQPRSRSRGGR) shows a compositional bias: basic residues. Residues 75-96 (APPPPPAKPPPPPPAPPPPPLP) are compositionally biased toward pro residues. Residues 149–267 (TGCCHVESFK…KETKEKILGL (119 aa)) form a UBP-type zinc finger. Residues cysteine 151, histidine 153, cysteine 192, cysteine 195, cysteine 205, cysteine 208, cysteine 213, histidine 218, histidine 222, histidine 228, cysteine 241, and cysteine 244 each coordinate Zn(2+). The region spanning 320–656 (RGLINLGNTC…EGYLLFYHRQ (337 aa)) is the USP domain. Cysteine 329 (nucleophile) is an active-site residue. Histidine 615 (proton acceptor) is an active-site residue.

It belongs to the peptidase C19 family. As to quaternary structure, interacts with H2A.

The protein resides in the chromosome. It carries out the reaction Thiol-dependent hydrolysis of ester, thioester, amide, peptide and isopeptide bonds formed by the C-terminal Gly of ubiquitin (a 76-residue protein attached to proteins as an intracellular targeting signal).. Specifically deubiquitinates 'Lys-14' (H2AK13Ub) and 'Lys-16'(H2AK15Ub) of histone H2A regulating the DNA damage response at double-strand breaks (DSBs). USP51 is recruited to chromatin after DNA damage and regulates the dynamic assembly/disassembly of TP53BP1 and BRCA1. Functions in DNA double-strand break repair also by mediating the deubiquitination and subsequent stabilization of DGCR8, leading to the recruitment of DGCR8 binding partners to double strand breaks such as RNF168 or MDC1. In addition, promotes the deubiquitination and stabilization of the transcriptional repressor ZEB1. The chain is Ubiquitin carboxyl-terminal hydrolase 51 from Mus musculus (Mouse).